The sequence spans 208 residues: Component of Sp100-rs (208 aa).

The HSR domain occupies 6 to 121; that stretch reads GSPRMSTEQE…LRRSFECGAK (116 aa).

In Mus musculus (Mouse), this protein is Component of Sp100-rs (Csprs).